We begin with the raw amino-acid sequence, 192 residues long: Glycerol-3-phosphate acyltransferase (192 aa).

5 helical membrane-spanning segments follow: residues 3-23 (ALFL…EVIA), 51-71 (YGVL…LIAV), 80-100 (VLTF…FFGF), 112-132 (VVFA…LGIF), and 149-169 (AFLF…AIVI).

The protein belongs to the PlsY family. As to quaternary structure, probably interacts with PlsX.

It is found in the cell inner membrane. The catalysed reaction is an acyl phosphate + sn-glycerol 3-phosphate = a 1-acyl-sn-glycero-3-phosphate + phosphate. It participates in lipid metabolism; phospholipid metabolism. In terms of biological role, catalyzes the transfer of an acyl group from acyl-phosphate (acyl-PO(4)) to glycerol-3-phosphate (G3P) to form lysophosphatidic acid (LPA). This enzyme utilizes acyl-phosphate as fatty acyl donor, but not acyl-CoA or acyl-ACP. This chain is Glycerol-3-phosphate acyltransferase, found in Aquifex aeolicus (strain VF5).